Consider the following 305-residue polypeptide: Tyrosine recombinase XerC (305 aa).

The Core-binding (CB) domain maps to 1 to 93 (MVLDGFAAHF…SWRQYCVWLV (93 aa)). In terms of domain architecture, Tyr recombinase spans 114–294 (RVPKALPQEW…DFDHIARLYD (181 aa)). Residues Arg155, Lys179, His246, Arg249, and His272 contribute to the active site. Tyr281 serves as the catalytic O-(3'-phospho-DNA)-tyrosine intermediate.

The protein belongs to the 'phage' integrase family. XerC subfamily. In terms of assembly, forms a cyclic heterotetrameric complex composed of two molecules of XerC and two molecules of XerD.

It localises to the cytoplasm. Functionally, site-specific tyrosine recombinase, which acts by catalyzing the cutting and rejoining of the recombining DNA molecules. The XerC-XerD complex is essential to convert dimers of the bacterial chromosome into monomers to permit their segregation at cell division. It also contributes to the segregational stability of plasmids. The sequence is that of Tyrosine recombinase XerC from Neisseria meningitidis serogroup C / serotype 2a (strain ATCC 700532 / DSM 15464 / FAM18).